The sequence spans 833 residues: cGMP-specific 3',5'-cyclic phosphodiesterase (833 aa).

The residue at position 60 (Ser60) is a Phosphoserine. Positions Phe82–Ser101 are disordered. GAF domains follow at residues Asp122–Leu272 and Ser304–Ile461. One can recognise a PDEase domain in the interval Glu494–Gln818. His571 (proton donor) is an active-site residue. His575, His611, Asp612, and Asp722 together coordinate Zn(2+). Asp612 contributes to the Mg(2+) binding site. Gln775 is a 3',5'-cyclic GMP binding site.

This sequence belongs to the cyclic nucleotide phosphodiesterase family. Zn(2+) is required as a cofactor. The cofactor is Mg(2+). Phosphorylation is regulated by binding of cGMP to the two allosteric sites. Phosphorylation by PRKG1 leads to its activation.

It carries out the reaction 3',5'-cyclic GMP + H2O = GMP + H(+). It participates in purine metabolism; 3',5'-cyclic GMP degradation; GMP from 3',5'-cyclic GMP: step 1/1. Functionally, plays a role in signal transduction by regulating the intracellular concentration of cyclic nucleotides. This phosphodiesterase catalyzes the specific hydrolysis of cGMP to 5'-GMP. Specifically regulates nitric-oxide-generated cGMP. The chain is cGMP-specific 3',5'-cyclic phosphodiesterase (Pde5a) from Rattus norvegicus (Rat).